The sequence spans 150 residues: Transcriptional repressor NrdR (150 aa).

The segment at 3 to 34 (CPFCHHPQSRVIDSRTVENGFVTRRRRQCTKC) is a zinc-finger region. One can recognise an ATP-cone domain in the interval 46–136 (LLVEKRNGVT…VYKSFSSMED (91 aa)).

Belongs to the NrdR family. It depends on Zn(2+) as a cofactor.

Functionally, negatively regulates transcription of bacterial ribonucleotide reductase nrd genes and operons by binding to NrdR-boxes. The chain is Transcriptional repressor NrdR from Corynebacterium kroppenstedtii (strain DSM 44385 / JCM 11950 / CIP 105744 / CCUG 35717).